We begin with the raw amino-acid sequence, 493 residues long: Malonyl-CoA decarboxylase, mitochondrial (493 aa).

Residues 1 to 39 constitute a mitochondrion transit peptide; that stretch reads MRGFGPGLTARRLLPLRLPPRPPGPRLASGQAAGALERA. The tract at residues 40-190 is alpha-helical domain; it reads MDELLRRAVP…VLKGMLSEWF (151 aa). Lys-59 is modified (N6-acetyllysine). Lys-168 bears the N6-acetyllysine; alternate mark. Lys-168 carries the post-translational modification N6-succinyllysine; alternate. Positions 191–493 are catalytic domain; the sequence is SSGFLNLERV…VAQFQKNSKL (303 aa). Position 211 is an N6-acetyllysine (Lys-211). Lys-222 carries the post-translational modification N6-succinyllysine. Malonyl-CoA-binding positions include 299 to 305 and Ser-329; that span reads QGVELGT. The active-site Proton acceptor is Ser-329. Position 389 is an N6-acetyllysine (Lys-389). A malonyl-CoA-binding site is contributed by His-423. Catalysis depends on His-423, which acts as the Proton donor. The residue at position 472 (Lys-472) is an N6-acetyllysine. Residues 491–493 carry the Microbody targeting signal motif; the sequence is SKL.

As to quaternary structure, homotetramer. Dimer of dimers. The two subunits within a dimer display conformational differences suggesting that at any given moment, only one of the two subunits is competent for malonyl-CoA binding and catalytic activity. Under oxidizing conditions, can form disulfide-linked homotetramers (in vitro). Associates with the peroxisomal targeting signal receptor PEX5. Acetylation at Lys-472 activates malonyl-CoA decarboxylase activity. Deacetylation at Lys-472 by SIRT4 represses activity, leading to promote lipogenesis. Post-translationally, interchain disulfide bonds may form in peroxisomes (Potential). Interchain disulfide bonds are not expected to form in the reducing environment of the cytoplasm and mitochondria. In terms of tissue distribution, expressed in fibroblasts and hepatoblastoma cells (at protein level). Expressed strongly in heart, liver, skeletal muscle, kidney and pancreas. Expressed in myotubes. Expressed weakly in brain, placenta, spleen, thymus, testis, ovary and small intestine.

The protein resides in the cytoplasm. The protein localises to the mitochondrion matrix. It localises to the peroxisome. It is found in the peroxisome matrix. The enzyme catalyses malonyl-CoA + H(+) = acetyl-CoA + CO2. The protein operates within metabolic intermediate biosynthesis; acetyl-CoA biosynthesis; acetyl-CoA from malonyl-CoA: step 1/1. Malonyl-CoA decarboxylase activity does not require any cofactors or divalent metal ions. Formation of interchain disulfide bonds leads to positive cooperativity between active sites and increases the affinity for malonyl-CoA and the catalytic efficiency (in vitro). In terms of biological role, catalyzes the conversion of malonyl-CoA to acetyl-CoA. In the fatty acid biosynthesis MCD selectively removes malonyl-CoA and thus assures that methyl-malonyl-CoA is the only chain elongating substrate for fatty acid synthase and that fatty acids with multiple methyl side chains are produced. In peroxisomes it may be involved in degrading intraperoxisomal malonyl-CoA, which is generated by the peroxisomal beta-oxidation of odd chain-length dicarboxylic fatty acids. Plays a role in the metabolic balance between glucose and lipid oxidation in muscle independent of alterations in insulin signaling. May play a role in controlling the extent of ischemic injury by promoting glucose oxidation. In Homo sapiens (Human), this protein is Malonyl-CoA decarboxylase, mitochondrial.